A 200-amino-acid polypeptide reads, in one-letter code: Methylthioribulose-1-phosphate dehydratase (200 aa).

The Zn(2+) site is built by H90 and H92.

This sequence belongs to the aldolase class II family. MtnB subfamily. Zn(2+) serves as cofactor.

The enzyme catalyses 5-(methylsulfanyl)-D-ribulose 1-phosphate = 5-methylsulfanyl-2,3-dioxopentyl phosphate + H2O. The protein operates within amino-acid biosynthesis; L-methionine biosynthesis via salvage pathway; L-methionine from S-methyl-5-thio-alpha-D-ribose 1-phosphate: step 2/6. Functionally, catalyzes the dehydration of methylthioribulose-1-phosphate (MTRu-1-P) into 2,3-diketo-5-methylthiopentyl-1-phosphate (DK-MTP-1-P). This is Methylthioribulose-1-phosphate dehydratase from Sodalis glossinidius (strain morsitans).